The following is a 928-amino-acid chain: ATP-dependent DNA helicase PIF5 (928 aa).

The transit peptide at 1–49 (MLSRLSAVWRPSRVALRIQRVDFTTCGNRLNRSTQPNEPPLVSGIAARS) directs the protein to the mitochondrion. Disordered regions lie at residues 29 to 141 (RLNR…DVAI) and 176 to 231 (LRAK…FSDA). A compositionally biased stretch (basic and acidic residues) spans 52–61 (AKAEPVEKRG). 264-271 (GGAGSGKS) lines the ATP pocket. Disordered stretches follow at residues 389-421 (PIPPRNKPQQKTEENAEAQEGGDPTDGTPAPSK), 481-513 (KSSAKSRKKKDEDAGNDGVLPLTDAETTPAAAE), 545-572 (IYPSPNDGSSQQTGSSNGANSVTEEDTM), and 585-607 (STHETEPETTEETTTGTQPSQPW). The segment covering 550 to 566 (NDGSSQQTGSSNGANSV) has biased composition (polar residues). Residues 858-877 (QAYVALSRSTRLDNIRLLDF) mediate DNA binding. A disordered region spans residues 898–928 (EELDNEIEDDGTEGDEEALEGDGEYEGEVEE).

This sequence belongs to the helicase family. PIF1 subfamily. Monomer. Mg(2+) serves as cofactor.

It is found in the mitochondrion. It carries out the reaction Couples ATP hydrolysis with the unwinding of duplex DNA at the replication fork by translocating in the 5'-3' direction. This creates two antiparallel DNA single strands (ssDNA). The leading ssDNA polymer is the template for DNA polymerase III holoenzyme which synthesizes a continuous strand.. It catalyses the reaction ATP + H2O = ADP + phosphate + H(+). Functionally, DNA-dependent ATPase and 5'-3' DNA helicase required for the maintenance of mitochondrial (kinetoplast) genome stability. Involved in processing of minicircle Okazaki fragments. This Trypanosoma brucei brucei (strain 927/4 GUTat10.1) protein is ATP-dependent DNA helicase PIF5.